Consider the following 224-residue polypeptide: UPF0758 protein PFL_6051 (224 aa).

An MPN domain is found at 102–224 (ALENPLVVRD…PLSMAEYGWI (123 aa)). Positions 173, 175, and 186 each coordinate Zn(2+). A JAMM motif motif is present at residues 173-186 (HNHPSGICEPSPAD).

It belongs to the UPF0758 family.

The protein is UPF0758 protein PFL_6051 of Pseudomonas fluorescens (strain ATCC BAA-477 / NRRL B-23932 / Pf-5).